The chain runs to 129 residues: Transcription antitermination protein NusB (129 aa).

Belongs to the NusB family.

In terms of biological role, involved in transcription antitermination. Required for transcription of ribosomal RNA (rRNA) genes. Binds specifically to the boxA antiterminator sequence of the ribosomal RNA (rrn) operons. The polypeptide is Transcription antitermination protein NusB (Staphylococcus aureus (strain MRSA252)).